We begin with the raw amino-acid sequence, 180 residues long: Large ribosomal subunit protein uL6 (180 aa).

It belongs to the universal ribosomal protein uL6 family. In terms of assembly, part of the 50S ribosomal subunit.

Functionally, this protein binds to the 23S rRNA, and is important in its secondary structure. It is located near the subunit interface in the base of the L7/L12 stalk, and near the tRNA binding site of the peptidyltransferase center. In Clostridioides difficile (strain 630) (Peptoclostridium difficile), this protein is Large ribosomal subunit protein uL6.